The primary structure comprises 230 residues: Extracellular deoxyribonuclease (230 aa).

The signal sequence occupies residues 1 to 20; it reads MFRPLLSLCLALLVSAPAHA.

The protein belongs to the EndA/NucM nuclease family.

It is found in the secreted. This Aeromonas hydrophila protein is Extracellular deoxyribonuclease (dns).